Here is a 79-residue protein sequence, read N- to C-terminus: Putative defensin-like protein 137 (79 aa).

Positions 1-24 are cleaved as a signal peptide; the sequence is MKKYFQPSFVILIIFTVLVLGVVG. 4 disulfide bridges follow: C33/C78, C42/C62, C47/C72, and C51/C74.

Belongs to the DEFL family.

Its subcellular location is the secreted. This is Putative defensin-like protein 137 (LCR14) from Arabidopsis thaliana (Mouse-ear cress).